Reading from the N-terminus, the 277-residue chain is Nickel transport system permease protein NikC (277 aa).

The Cytoplasmic segment spans residues Met-1–Arg-12. The chain crosses the membrane as a helical span at residues Leu-13–Pro-33. At Tyr-34 to Val-78 the chain is on the periplasmic side. Residues Leu-67–Gly-260 enclose the ABC transmembrane type-1 domain. A helical membrane pass occupies residues Met-79 to Ile-99. Over Gly-100–Ser-120 the chain is Cytoplasmic. Residues Ile-121 to Ile-141 traverse the membrane as a helical segment. Topologically, residues Ala-142–His-183 are periplasmic. A helical membrane pass occupies residues Leu-184–Met-204. Over Leu-205 to Val-207 the chain is Cytoplasmic. Residues Ala-208 to Ile-228 traverse the membrane as a helical segment. Topologically, residues Asn-229–Pro-239 are periplasmic. Residues Leu-240–Gly-260 traverse the membrane as a helical segment. At Asp-261–His-277 the chain is on the cytoplasmic side.

It belongs to the binding-protein-dependent transport system permease family. OppBC subfamily. In terms of assembly, probably forms a heterodimeric pore with NikB.

It is found in the cell inner membrane. In terms of biological role, involved in a nickel transport system, probably translocates nickel through the bacterial inner membrane. This Escherichia coli O157:H7 protein is Nickel transport system permease protein NikC (nikC).